Consider the following 224-residue polypeptide: Thiamine-phosphate synthase (224 aa).

Residues 44–48 and Asn79 contribute to the 4-amino-2-methyl-5-(diphosphooxymethyl)pyrimidine site; that span reads QFREK. Residues Asp80 and Asp99 each coordinate Mg(2+). Ser117 provides a ligand contact to 4-amino-2-methyl-5-(diphosphooxymethyl)pyrimidine. Residue 143–145 coordinates 2-[(2R,5Z)-2-carboxy-4-methylthiazol-5(2H)-ylidene]ethyl phosphate; it reads TET. Residue Lys146 coordinates 4-amino-2-methyl-5-(diphosphooxymethyl)pyrimidine. 2-[(2R,5Z)-2-carboxy-4-methylthiazol-5(2H)-ylidene]ethyl phosphate-binding positions include Gly175 and 195–196; that span reads IS.

It belongs to the thiamine-phosphate synthase family. It depends on Mg(2+) as a cofactor.

It carries out the reaction 2-[(2R,5Z)-2-carboxy-4-methylthiazol-5(2H)-ylidene]ethyl phosphate + 4-amino-2-methyl-5-(diphosphooxymethyl)pyrimidine + 2 H(+) = thiamine phosphate + CO2 + diphosphate. It catalyses the reaction 2-(2-carboxy-4-methylthiazol-5-yl)ethyl phosphate + 4-amino-2-methyl-5-(diphosphooxymethyl)pyrimidine + 2 H(+) = thiamine phosphate + CO2 + diphosphate. The enzyme catalyses 4-methyl-5-(2-phosphooxyethyl)-thiazole + 4-amino-2-methyl-5-(diphosphooxymethyl)pyrimidine + H(+) = thiamine phosphate + diphosphate. It functions in the pathway cofactor biosynthesis; thiamine diphosphate biosynthesis; thiamine phosphate from 4-amino-2-methyl-5-diphosphomethylpyrimidine and 4-methyl-5-(2-phosphoethyl)-thiazole: step 1/1. Functionally, condenses 4-methyl-5-(beta-hydroxyethyl)thiazole monophosphate (THZ-P) and 2-methyl-4-amino-5-hydroxymethyl pyrimidine pyrophosphate (HMP-PP) to form thiamine monophosphate (TMP). This Bacillus licheniformis (strain ATCC 14580 / DSM 13 / JCM 2505 / CCUG 7422 / NBRC 12200 / NCIMB 9375 / NCTC 10341 / NRRL NRS-1264 / Gibson 46) protein is Thiamine-phosphate synthase.